We begin with the raw amino-acid sequence, 290 residues long: ATP synthase gamma chain (290 aa).

Belongs to the ATPase gamma chain family. In terms of assembly, F-type ATPases have 2 components, CF(1) - the catalytic core - and CF(0) - the membrane proton channel. CF(1) has five subunits: alpha(3), beta(3), gamma(1), delta(1), epsilon(1). CF(0) has three main subunits: a, b and c.

It is found in the cell inner membrane. Produces ATP from ADP in the presence of a proton gradient across the membrane. The gamma chain is believed to be important in regulating ATPase activity and the flow of protons through the CF(0) complex. The protein is ATP synthase gamma chain of Anaeromyxobacter sp. (strain K).